The sequence spans 199 residues: Recombination protein RecR (199 aa).

The C4-type zinc-finger motif lies at Cys58 to Cys73. Residues Ala81–Pro176 enclose the Toprim domain.

This sequence belongs to the RecR family.

Functionally, may play a role in DNA repair. It seems to be involved in an RecBC-independent recombinational process of DNA repair. It may act with RecF and RecO. In Azoarcus sp. (strain BH72), this protein is Recombination protein RecR.